A 278-amino-acid polypeptide reads, in one-letter code: MRGEASRIADRESRDSLAPKLRDTREDAWRIGNELFTITKVLDDSIQLERALTDPSRPVADKVAVLTELLGDNVHPMTMEIMTDLVSRHWSRARDIANAVEDFGVDAMMYYADATGATLQVSVELSELHSALLNLPVVRAKLYDYQATSEARVKLFREVFSGKTLNKVTMRLAEHATCNLRRRRYLETIQWMINKFSRHMGESMVTVTTATPLKKEQIKRLVEVYSAKVGRQVHINSVVDPTVLGGMRIQVGDEVTDNTVVAQLQNLHRKVQTEATPA.

The protein belongs to the ATPase delta chain family. In terms of assembly, F-type ATPases have 2 components, F(1) - the catalytic core - and F(0) - the membrane proton channel. F(1) has five subunits: alpha(3), beta(3), gamma(1), delta(1), epsilon(1). F(0) has three main subunits: a(1), b(2) and c(10-14). The alpha and beta chains form an alternating ring which encloses part of the gamma chain. F(1) is attached to F(0) by a central stalk formed by the gamma and epsilon chains, while a peripheral stalk is formed by the delta and b chains.

The protein localises to the cell membrane. Functionally, f(1)F(0) ATP synthase produces ATP from ADP in the presence of a proton or sodium gradient. F-type ATPases consist of two structural domains, F(1) containing the extramembraneous catalytic core and F(0) containing the membrane proton channel, linked together by a central stalk and a peripheral stalk. During catalysis, ATP synthesis in the catalytic domain of F(1) is coupled via a rotary mechanism of the central stalk subunits to proton translocation. In terms of biological role, this protein is part of the stalk that links CF(0) to CF(1). It either transmits conformational changes from CF(0) to CF(1) or is implicated in proton conduction. This is ATP synthase subunit delta from Bifidobacterium longum subsp. infantis (strain ATCC 15697 / DSM 20088 / JCM 1222 / NCTC 11817 / S12).